A 210-amino-acid polypeptide reads, in one-letter code: 3-demethoxyubiquinol 3-hydroxylase (210 aa).

Glutamate 59, glutamate 89, histidine 92, glutamate 141, glutamate 173, and histidine 176 together coordinate Fe cation.

This sequence belongs to the COQ7 family. It depends on Fe cation as a cofactor.

The protein localises to the cell membrane. The catalysed reaction is a 5-methoxy-2-methyl-3-(all-trans-polyprenyl)benzene-1,4-diol + AH2 + O2 = a 3-demethylubiquinol + A + H2O. Its pathway is cofactor biosynthesis; ubiquinone biosynthesis. Functionally, catalyzes the hydroxylation of 2-nonaprenyl-3-methyl-6-methoxy-1,4-benzoquinol during ubiquinone biosynthesis. The sequence is that of 3-demethoxyubiquinol 3-hydroxylase from Marinomonas sp. (strain MWYL1).